We begin with the raw amino-acid sequence, 165 residues long: Type VI lipase immunity protein Tli3 (165 aa).

The first 21 residues, 1 to 21, serve as a signal peptide directing secretion; it reads MKCKTLLIACLFGLGSAQALA.

Interacts with the Tle3 toxin.

The protein localises to the periplasm. Immunity protein that neutralizes the toxicity of the P.aeruginosa antibacterial toxin Tle3 in the periplasm to protect the cell from fratricide intoxication. The polypeptide is Type VI lipase immunity protein Tli3 (Pseudomonas aeruginosa (strain ATCC 15692 / DSM 22644 / CIP 104116 / JCM 14847 / LMG 12228 / 1C / PRS 101 / PAO1)).